The chain runs to 248 residues: Ribosomal RNA small subunit methyltransferase J (248 aa).

Residues 98–99, 114–115, 150–151, and Asp-168 each bind S-adenosyl-L-methionine; these read RD, ER, and SS.

This sequence belongs to the methyltransferase superfamily. RsmJ family.

Its subcellular location is the cytoplasm. It catalyses the reaction guanosine(1516) in 16S rRNA + S-adenosyl-L-methionine = N(2)-methylguanosine(1516) in 16S rRNA + S-adenosyl-L-homocysteine + H(+). Its function is as follows. Specifically methylates the guanosine in position 1516 of 16S rRNA. The protein is Ribosomal RNA small subunit methyltransferase J of Shewanella denitrificans (strain OS217 / ATCC BAA-1090 / DSM 15013).